A 244-amino-acid polypeptide reads, in one-letter code: High affinity immunoglobulin epsilon receptor subunit beta (244 aa).

Topologically, residues 1–59 (MDTESNRRANLALPQEPSSVPAFEVLEISPQEVSSGRLLKSASSPPLHTWLTVLKKEQE) are cytoplasmic. A helical membrane pass occupies residues 60-79 (FLGVTQILTAMICLCFGTVV). Topologically, residues 80-97 (CSVLDISHIEGDIFSSFK) are extracellular. A helical transmembrane segment spans residues 98-117 (AGYPFWGAIFFSISGMLSII). Topologically, residues 118 to 130 (SERRNATYLVRGS) are cytoplasmic. The chain crosses the membrane as a helical span at residues 131-150 (LGANTASSIAGGTGITILII). Topologically, residues 151–180 (NLKKSLAYIHIHSCQKFFETKCFMASFSTE) are extracellular. A helical membrane pass occupies residues 181–200 (IVVMMLFLTILGLGSAVSLT). The Cytoplasmic portion of the chain corresponds to 201–244 (ICGAGEELKGNKVPEDRVYEELNIYSATYSELEDPGEMSPPIDL). A phosphotyrosine mark is found at Y219 and Y225. S226 carries the phosphoserine modification. Y229 carries the phosphotyrosine modification.

Belongs to the MS4A family. As to quaternary structure, tetramer of an alpha chain, a beta chain, and two disulfide linked gamma chains. Binds LILRB1. Interacts with FGR, FES/FPS and LYN. In terms of processing, phosphorylated on tyrosine residues by LYN. In terms of tissue distribution, found on the surface of mast cells and basophils.

The protein resides in the membrane. Its function is as follows. High affinity receptor that binds to the Fc region of immunoglobulins epsilon. Aggregation of FCER1 by multivalent antigens is required for the full mast cell response, including the release of preformed mediators (such as histamine) by degranulation and de novo production of lipid mediators and cytokines. Also mediates the secretion of important lymphokines. Binding of allergen to receptor-bound IgE leads to cell activation and the release of mediators responsible for the manifestations of allergy. The sequence is that of High affinity immunoglobulin epsilon receptor subunit beta (MS4A2) from Homo sapiens (Human).